We begin with the raw amino-acid sequence, 347 residues long: 3-isopropylmalate dehydrogenase (347 aa).

Substrate contacts are provided by arginine 87, arginine 97, arginine 121, and aspartate 212. Residues aspartate 212, aspartate 236, and aspartate 240 each contribute to the Mg(2+) site. 272-284 (GSAPDIAGQGTAD) serves as a coordination point for NAD(+).

It belongs to the isocitrate and isopropylmalate dehydrogenases family. LeuB type 2 subfamily. As to quaternary structure, homodimer. Mg(2+) is required as a cofactor. Requires Mn(2+) as cofactor.

It is found in the cytoplasm. The catalysed reaction is (2R,3S)-3-isopropylmalate + NAD(+) = 4-methyl-2-oxopentanoate + CO2 + NADH. It participates in amino-acid biosynthesis; L-leucine biosynthesis; L-leucine from 3-methyl-2-oxobutanoate: step 3/4. Functionally, catalyzes the oxidation of 3-carboxy-2-hydroxy-4-methylpentanoate (3-isopropylmalate) to 3-carboxy-4-methyl-2-oxopentanoate. The product decarboxylates to 4-methyl-2 oxopentanoate. This is 3-isopropylmalate dehydrogenase from Saccharopolyspora erythraea (strain ATCC 11635 / DSM 40517 / JCM 4748 / NBRC 13426 / NCIMB 8594 / NRRL 2338).